The primary structure comprises 129 residues: Glycine cleavage system H protein (129 aa).

The 83-residue stretch at 24-106 folds into the Lipoyl-binding domain; the sequence is TYTVGITEHA…YTGGWIFKIK (83 aa). An N6-lipoyllysine modification is found at lysine 65.

It belongs to the GcvH family. In terms of assembly, the glycine cleavage system is composed of four proteins: P, T, L and H. Requires (R)-lipoate as cofactor.

Its function is as follows. The glycine cleavage system catalyzes the degradation of glycine. The H protein shuttles the methylamine group of glycine from the P protein to the T protein. This is Glycine cleavage system H protein from Salmonella choleraesuis (strain SC-B67).